The sequence spans 66 residues: uncharacterized protein (66 aa).

Helical transmembrane passes span 5-25 (ALIV…PLVN) and 30-50 (IMFG…VTPL).

It localises to the cell membrane. This is an uncharacterized protein from Bacillus subtilis (strain 168).